The chain runs to 2034 residues: Host cell factor 1 (2034 aa).

Residue alanine 2 is modified to N-acetylalanine. Serine 6 carries the post-translational modification Phosphoserine. Kelch repeat units lie at residues 44-89 (LIVV…GFVC), 93-140 (RLLV…RLGH), 148-194 (KCYL…ITYG), 217-265 (KLVI…TIGN), and 266-313 (KMYV…LMDT). Residues lysine 105, lysine 163, and lysine 244 each participate in a glycyl lysine isopeptide (Lys-Gly) (interchain with G-Cter in ubiquitin) cross-link. Lysine 282 is covalently cross-linked (Glycyl lysine isopeptide (Lys-Gly) (interchain with G-Cter in SUMO2)). Lysine 288 carries the N6-acetyllysine modification. Residue lysine 363 forms a Glycyl lysine isopeptide (Lys-Gly) (interchain with G-Cter in ubiquitin) linkage. A Fibronectin type-III 1 domain is found at 366-469 (PPARVQLVRA…TIQVLPTVPG (104 aa)). The disordered stretch occupies residues 407 to 434 (ATATSPTPNPVPSVPANPPKSPAPAAAA). Phosphoserine is present on serine 411. The span at 413–428 (TPNPVPSVPANPPKSP) shows a compositional bias: pro residues. Positions 500–550 (LVTMRPASQAGKAPVTVTSLPASVRMVVPTQSAQGTVIGSNPQMSGMAALA) are required for interaction with OGT. Residues arginine 504 and arginine 524 each carry the omega-N-methylarginine modification. Serine 598, serine 666, and serine 669 each carry phosphoserine. An interaction with SIN3A region spans residues 610–722 (LKTAAAQVGT…KGPLPAGTIL (113 aa)). Residues 750–902 (ILGISSVSPS…SLAGAGAHST (153 aa)) are interaction with ZBTB17. Lysine 813 is subject to N6-acetyllysine. The tract at residues 813–912 (KIITAVPKIA…SASLATPITT (100 aa)) is interaction with GABP2. HCF repeat repeat units lie at residues 1010 to 1035 (TLVC…TVVA), 1072 to 1097 (VRVC…ATSN), and 1101 to 1126 (QHGC…AMSS). The HCF repeat 4; degenerate repeat unit spans residues 1156–1182 (RAQGTVKPPCQTQQTNMTSTTMTVQAT). A phosphoserine mark is found at serine 1204 and serine 1223. 4 disordered regions span residues 1221-1241 (GPSS…TYTT), 1302-1374 (PCET…TTST), 1444-1477 (TVTS…NITS), and 1491-1525 (RAVT…QLPP). HCF repeat repeat units lie at residues 1295 to 1320 (TQVC…SNAG) and 1323 to 1348 (QRVC…ATSN). Low complexity predominate over residues 1308 to 1321 (TGTTNTATTSNAGS). One copy of the HCF repeat 7; degenerate repeat lies at 1358–1383 (QQPASGHPCETHQTTSTGTTMSVSVG). The stretch at 1423–1448 (QRVCSNPPCETHETGTTHTATTVTSN) is one HCF repeat 8 repeat. Over residues 1491 to 1501 (RAVTTVTQSTP) the composition is skewed to low complexity. Threonine 1500 carries the phosphothreonine modification. Residues 1502 to 1511 (VPGPSVPPPE) show a composition bias toward pro residues. Phosphoserine occurs at positions 1506 and 1516. Residues 1693–1723 (IVLTQQELAALVQQQQQLQEAQAQAQQQHHL) are a coiled coil. A Phosphoserine modification is found at serine 1782. Fibronectin type-III domains follow at residues 1808–1899 (LPPP…TCLP) and 1901–2017 (FPGA…TSKD). Glycyl lysine isopeptide (Lys-Gly) (interchain with G-Cter in ubiquitin) cross-links involve residues lysine 1818 and lysine 1819. Serine 1849 carries the phosphoserine modification. The disordered stretch occupies residues 2005 to 2034 (ATQVRWLQETSKDSSGTKPASKRPMSSPEM). Lysine 2016 bears the N6-acetyllysine mark.

Composed predominantly of six polypeptides ranging from 110 to 150 kDa and a minor 300 kDa polypeptide. The majority of N- and C-terminal cleavage products remain tightly, albeit non-covalently, associated. Interacts with POU2F1, CREB3, ZBTB17, EGR2, E2F4, CREBZF, SP1, GABP2, Sin3 HDAC complex (SIN3A, HDAC1, HDAC2, SUDS3), SAP30, SIN3B and FHL2. Component of a MLL1 complex, composed of at least the core components KMT2A/MLL1, ASH2L, HCFC1, WDR5 and RBBP5, as well as the facultative components BACC1, CHD8, DPY30, E2F6, HCFC2, HSP70, INO80C, KANSL1, LAS1L, MAX, MCRS1, MEN1, MGA, KAT8, PELP1, PHF20, PRP31, RING2, RUVBL1, RUVBL2, SENP3, TAF1, TAF4, TAF6, TAF7, TAF9 and TEX10. Component of a THAP1/THAP3-HCFC1-OGT complex that is required for the regulation of the transcriptional activity of RRM1. Interacts directly with THAP3 (via its HBM). Interacts (via the Kelch-repeat domain) with THAP1 (via the HBM); the interaction recruits HCHC1 to the RRM1. Interacts with THAP7 and THAP11 (via the HMB). Interacts directly with OGT; the interaction, which requires the HCFC1 cleavage site domain, glycosylates and promotes the proteolytic processing of HCFC1, retains OGT in the nucleus and impacts the expression of herpes simplex virus immediate early viral genes. Component of the SET1 complex, at least composed of the catalytic subunit (SETD1A or SETD1B), WDR5, WDR82, RBBP5, ASH2L, CXXC1, HCFC1 and DPY30. Component of the NSL complex at least composed of MOF/KAT8, KANSL1, KANSL2, KANSL3, MCRS1, PHF20, OGT1/OGT, WDR5 and HCFC1. Component of a complex at least composed of ZNF335, HCFC1, CCAR2, EMSY, MKI67, RBBP5, ASH2L and WDR5; the complex is formed as a result of interactions between components of a nuclear receptor-mediated transcription complex and a histone methylation complex. Within the complex interacts with ZNF335. Interacts with TET2 and TET3. Interacts with HCFC1R1. Interacts with THAP11. Interacts (via Kelch domain) with KMT2E/MLL5 isoform 3 (via HBM motif). Interacts with E2F1. Accessory scaffold component of the polycomb repressive deubiquitinase (PR-DUB) complex, at least composed of BAP1, one of ASXL1, ASXL2 or (probably) ASXL3 and one of MBD5 or MBD6; the PR-DUB core associates with a number of accessory proteins, including FOXK1, FOXK2, KDM1B, HCFC1, YY1 and OGT. Interacts with YY1 (via Gly-rich region); the interaction is direct. Interacts with BAP1 (via HBM-like motif). In terms of processing, proteolytically cleaved at one or several PPCE--THET sites within the HCF repeats. Further cleavage of the primary N- and C-terminal chains results in a 'trimming' and accumulation of the smaller chains. Cleavage is promoted by O-glycosylation. Post-translationally, O-glycosylated. GlcNAcylation by OGT promotes proteolytic processing. Ubiquitinated. Lys-1818 and Lys-1819 are ubiquitinated both via 'Lys-48'- and 'Lys-63'-linked polyubiquitin chains. BAP1 mediated deubiquitination of 'Lys-48'-linked polyubiquitin chains; deubiquitination by BAP1 does not seem to stabilize the protein.

Its subcellular location is the cytoplasm. It localises to the nucleus. In terms of biological role, transcriptional coregulator. Serves as a scaffold protein, bridging interactions between transcription factors, including THAP11 and ZNF143, and transcriptional coregulators. Involved in control of the cell cycle. Also antagonizes transactivation by ZBTB17 and GABP2; represses ZBTB17 activation of the p15(INK4b) promoter and inhibits its ability to recruit p300. Coactivator for EGR2 and GABP2. Tethers the chromatin modifying Set1/Ash2 histone H3 'Lys-4' methyltransferase (H3K4me) and Sin3 histone deacetylase (HDAC) complexes (involved in the activation and repression of transcription, respectively) together. Component of a THAP1/THAP3-HCFC1-OGT complex that is required for the regulation of the transcriptional activity of RRM1. As part of the NSL complex it may be involved in acetylation of nucleosomal histone H4 on several lysine residues. Recruits KMT2E/MLL5 to E2F1 responsive promoters promoting transcriptional activation and thereby facilitates G1 to S phase transition. Modulates expression of homeobox protein PDX1, perhaps acting in concert with transcription factor E2F1, thereby regulating pancreatic beta-cell growth and glucose-stimulated insulin secretion. May negatively modulate transcriptional activity of FOXO3. The protein is Host cell factor 1 of Rattus norvegicus (Rat).